The chain runs to 289 residues: ADP-dependent (S)-NAD(P)H-hydrate dehydratase (289 aa).

Residues 9 to 286 (VTAAALRAQP…PEVPGILDRL (278 aa)) enclose the YjeF C-terminal domain. (6S)-NADPHX-binding residues include Ala-44 and His-160. Residues 197 to 201 (KGADS) and Gly-226 contribute to the AMP site. Asp-227 contacts (6S)-NADPHX.

This sequence belongs to the NnrD/CARKD family. In terms of assembly, homotetramer. Mg(2+) serves as cofactor.

The catalysed reaction is (6S)-NADHX + ADP = AMP + phosphate + NADH + H(+). It carries out the reaction (6S)-NADPHX + ADP = AMP + phosphate + NADPH + H(+). Catalyzes the dehydration of the S-form of NAD(P)HX at the expense of ADP, which is converted to AMP. Together with NAD(P)HX epimerase, which catalyzes the epimerization of the S- and R-forms, the enzyme allows the repair of both epimers of NAD(P)HX, a damaged form of NAD(P)H that is a result of enzymatic or heat-dependent hydration. The protein is ADP-dependent (S)-NAD(P)H-hydrate dehydratase of Xanthomonas campestris pv. campestris (strain ATCC 33913 / DSM 3586 / NCPPB 528 / LMG 568 / P 25).